The primary structure comprises 103 residues: Small ribosomal subunit protein uS10 (103 aa).

This sequence belongs to the universal ribosomal protein uS10 family. In terms of assembly, part of the 30S ribosomal subunit.

Functionally, involved in the binding of tRNA to the ribosomes. This is Small ribosomal subunit protein uS10 from Natranaerobius thermophilus (strain ATCC BAA-1301 / DSM 18059 / JW/NM-WN-LF).